A 210-amino-acid polypeptide reads, in one-letter code: Dynein regulatory complex protein 12 (210 aa).

The segment at 1-23 (MPPKNKEKGKKSGAQKKKKNWGA) is disordered. A compositionally biased stretch (basic residues) spans 7-20 (EKGKKSGAQKKKKN). Residues 49–161 (RDEARRAKAS…EAKYEEILHD (113 aa)) are a coiled coil. The tract at residues 188–210 (HKEQQRQFGLTPPGSLRPPAPSL) is disordered.

The protein belongs to the DRC12 family. As to quaternary structure, component of the nexin-dynein regulatory complex (N-DRC).

It localises to the cytoplasm. The protein resides in the cytoskeleton. The protein localises to the flagellum axoneme. Functionally, component of the nexin-dynein regulatory complex (N-DRC), a key regulator of ciliary/flagellar motility which maintains the alignment and integrity of the distal axoneme and regulates microtubule sliding in motile axonemes. This is Dynein regulatory complex protein 12 from Homo sapiens (Human).